The sequence spans 1129 residues: Protein LANA1 (1129 aa).

Disordered regions lie at residues 1 to 988 (MAPP…PVPY) and 1110 to 1129 (LPLT…QEMT). 2 stretches are compositionally biased toward basic and acidic residues: residues 28 to 41 (RSPE…DLHL) and 48 to 58 (VADSVDGRECG). The segment covering 85 to 104 (PVAPIPSPAPATPLPPPALL) has biased composition (pro residues). Residues 139–156 (SPESSQRPPLSSPTGRPD) are compositionally biased toward polar residues. Over residues 161–185 (MRPPPSQQTTPPHSPTTPPPEPPSK) the composition is skewed to pro residues. A compositionally biased stretch (low complexity) spans 186–197 (SSPDSLAPSTLR). The segment covering 207 to 217 (PQGPSTLNPIC) has biased composition (polar residues). Over residues 263–275 (PISIGSSSPSEGS) the composition is skewed to low complexity. Composition is skewed to basic and acidic residues over residues 292–301 (EASKNEKECS) and 314–323 (EISKESQVDK). The span at 324–419 (DDNDNKDDEE…DKKEDEEDGG (96 aa)) shows a compositional bias: acidic residues. Over residues 431 to 471 (QQQQEPQQQEPQQQEPQQQEPQQQEPQQQEPQQQEPQQQEP) the composition is skewed to low complexity. A compositionally biased stretch (basic and acidic residues) spans 472 to 528 (QQREPQQREPQQREPQQREPQQREPQQREPQQREPQQREPQQREPQQREPQQREPQQ). Residues 529-596 (REPQQQEPQQ…QQQEPQQQDE (68 aa)) show a composition bias toward low complexity. The segment covering 597-888 (QQQDEQQQDE…QELEEVEEQE (292 aa)) has biased composition (acidic residues). Over residues 924 to 934 (THEQIASSPPG) the composition is skewed to polar residues. Over residues 962–979 (PGVRMRRVPVTHPKKPHP) the composition is skewed to basic residues. Positions 1008–1129 (FLGKDGRRDP…GPGDSPQEMT (122 aa)) are DNA-binding domain.

In terms of assembly, homooligomer. Interacts with host BRD2. Interacts with host RELA, ELOB, ELOC and CUL5; these interactions induce the proteasomal degradation of host RELA. Interacts with host TRIM28 and NFE2L2/NRF2; these interactions are essential for the shutdown of lytic gene expression during the early stage of infection. Interacts (via N-terminus) with host histones H2A and H2B; these interactions are essential to dock LANA1 onto chromosomes. Interacts with host BUB1 and PCNA. Interacts with host NAP1L1; this interaction is required for LANA1-dependent DNA replication. Interacts with components of the host MLL1 complex KMT2A and WDR5.

The protein localises to the host nucleus. In terms of biological role, multifunctional protein that plays a role in the replication and long-term persistence of the viral episomal genome in dividing cells. Binds to mitotic chromosomes via its N-terminal region and to a 16-bp imperfect palindrome within the origin of replication (oriP) located in the viral terminal repeat (TR) through its C-terminal. Tethers viral episomes to chromosomes during mitosis. Plays a critical role in the shutdown of lytic gene expression during the early stage of infection by interacting with host TRIM28. Also plays a role in the repression of host NF-kappa-B activity upon TNF-alpha stimulation by promoting the proteasomal degradation of host RELA. Promotes nuclear localization and cleavage of host STAT6 leading to constitutive activation of the IL13/STAT6 signaling pathway to promote viral latency. Interacts with and modulates the histone methyltransferase MLL1 complex activity, leading to its recruitment on viral DNA terminal repeats changing the dynamic of histone H3 methylated 'Lys-4'(H3K4me) profile during the initial hours following infection. This Homo sapiens (Human) protein is Protein LANA1 (LANA1).